The following is an 84-amino-acid chain: Large ribosomal subunit protein bL27 (84 aa).

The segment at 1–27 (MAHKKGQGASRNGRDSKSKRLGVKVGA) is disordered.

It belongs to the bacterial ribosomal protein bL27 family.

The sequence is that of Large ribosomal subunit protein bL27 from Chlamydia pneumoniae (Chlamydophila pneumoniae).